The chain runs to 300 residues: MTDTPDPAAVSSPAIKAAVLSEALPYIRRFHGKTIVVKYGGNAMTEERLQRSFAHDVVLLKLVGLNPVVVHGGGPQIDDALRRIGKQGTFVQGMRVTDAETMEVVEWVLGGQVQQDIVMMINEVGGKAVGLTGKDGMLIQARKKLMANKENPQEPIDIGFVGDITQVEPAVVKALQDDQFIPVISPIGYGEDGTAYNINADVVAGKMAEVLGAEKLLMMTNTPGVLDKSGKLLRSLSAQTIDELFADGTISGGMLPKIASSLDAAKNGVNSVHIVDGRVPHCLLLEILTDQGVGTMISSH.

Substrate-binding positions include 73–74 (GG), arginine 95, and asparagine 197.

The protein belongs to the acetylglutamate kinase family. ArgB subfamily.

It is found in the cytoplasm. It carries out the reaction N-acetyl-L-glutamate + ATP = N-acetyl-L-glutamyl 5-phosphate + ADP. The protein operates within amino-acid biosynthesis; L-arginine biosynthesis; N(2)-acetyl-L-ornithine from L-glutamate: step 2/4. In terms of biological role, catalyzes the ATP-dependent phosphorylation of N-acetyl-L-glutamate. The protein is Acetylglutamate kinase of Bordetella petrii (strain ATCC BAA-461 / DSM 12804 / CCUG 43448).